The primary structure comprises 90 residues: Auxin-responsive protein SAUR24 (90 aa).

Belongs to the ARG7 family.

It is found in the cell membrane. Its function is as follows. Functions as a positive effector of cell expansion through modulation of auxin transport. This Arabidopsis thaliana (Mouse-ear cress) protein is Auxin-responsive protein SAUR24.